The chain runs to 101 residues: MLSLAHFLVLGAILFAISIVGIFLNRKNVIVLLMAIELMLLAVNINFVAFSHYLGDLAGQVFVFFILTVAAAESAIGLAILVVLFRNLDTINVDDMDTLKG.

The next 3 membrane-spanning stretches (helical) occupy residues 4–24 (LAHFLVLGAILFAISIVGIFL), 30–50 (IVLLMAIELMLLAVNINFVAF), and 61–81 (VFVFFILTVAAAESAIGLAIL).

The protein belongs to the complex I subunit 4L family. NDH-1 is composed of 14 different subunits. Subunits NuoA, H, J, K, L, M, N constitute the membrane sector of the complex.

Its subcellular location is the cell inner membrane. It carries out the reaction a quinone + NADH + 5 H(+)(in) = a quinol + NAD(+) + 4 H(+)(out). Functionally, NDH-1 shuttles electrons from NADH, via FMN and iron-sulfur (Fe-S) centers, to quinones in the respiratory chain. The immediate electron acceptor for the enzyme in this species is believed to be ubiquinone. Couples the redox reaction to proton translocation (for every two electrons transferred, four hydrogen ions are translocated across the cytoplasmic membrane), and thus conserves the redox energy in a proton gradient. This is NADH-quinone oxidoreductase subunit K from Cupriavidus necator (strain ATCC 17699 / DSM 428 / KCTC 22496 / NCIMB 10442 / H16 / Stanier 337) (Ralstonia eutropha).